A 644-amino-acid polypeptide reads, in one-letter code: Exoribonuclease 2 (644 aa).

The RNB domain maps to 189-516 (REDLTALNFV…NHRLLKAMIT (328 aa)). Residues 561 to 643 (DTRFTAEIID…ETRNVIARPV (83 aa)) form the S1 motif domain.

It belongs to the RNR ribonuclease family. RNase II subfamily.

It is found in the cytoplasm. It carries out the reaction Exonucleolytic cleavage in the 3'- to 5'-direction to yield nucleoside 5'-phosphates.. Its function is as follows. Involved in mRNA degradation. Hydrolyzes single-stranded polyribonucleotides processively in the 3' to 5' direction. This chain is Exoribonuclease 2, found in Yersinia pseudotuberculosis serotype IB (strain PB1/+).